The chain runs to 176 residues: PRL-1 phosphatase (176 aa).

Positions 13–166 (APALIEYKGM…YKPKARLKHK (154 aa)) constitute a Tyrosine-protein phosphatase domain. Catalysis depends on Cys109, which acts as the Phosphocysteine intermediate. Cysteine methyl ester is present on Cys173. Cys173 carries S-farnesyl cysteine lipidation. Residues 174–176 (SVQ) constitute a propeptide, removed in mature form.

This sequence belongs to the protein-tyrosine phosphatase family. Homotrimer. Interacts with uex, possibly at the plasma membrane. In terms of tissue distribution, expressed in the adult head (at protein level). Expressed in neurons in the antennal lobe and V-glomeruli (at protein level). Expressed in dorsocentral neurons (at protein level).

The protein resides in the cytoplasm. It is found in the cell membrane. It localises to the apicolateral cell membrane. The protein localises to the cell projection. Its subcellular location is the axon. The enzyme catalyses O-phospho-L-tyrosyl-[protein] + H2O = L-tyrosyl-[protein] + phosphate. Its function is as follows. Probable phosphatase. Inhibits growth possibly by negatively regulating Src64B-induced growth. Regulates central nervous system circuit formation and stabilization of synapse-dense terminal arbors. In dorsocentral neurons, regulates synaptogenesis in terminal arbors via modulation of the insulin receptor pathway, likely upstream of Akt1, and via reduction of PtdIns(4,5)P2 (Phosphatidylinositol 4,5-bisphosphate) levels. In the nervous system, plays a protective role together with uex in response to olfactory carbon dioxide stimulation. The chain is PRL-1 phosphatase from Drosophila melanogaster (Fruit fly).